The chain runs to 296 residues: Glycine--tRNA ligase alpha subunit (296 aa).

Belongs to the class-II aminoacyl-tRNA synthetase family. In terms of assembly, tetramer of two alpha and two beta subunits.

The protein resides in the cytoplasm. It catalyses the reaction tRNA(Gly) + glycine + ATP = glycyl-tRNA(Gly) + AMP + diphosphate. This chain is Glycine--tRNA ligase alpha subunit, found in Francisella tularensis subsp. holarctica (strain FTNF002-00 / FTA).